The sequence spans 144 residues: Transcriptional regulator MraZ (144 aa).

2 consecutive SpoVT-AbrB domains span residues 5-47 (EYQY…PLDR) and 76-121 (AHKT…SQER).

Belongs to the MraZ family. As to quaternary structure, forms oligomers.

The protein localises to the cytoplasm. It localises to the nucleoid. In Thermus thermophilus (strain ATCC BAA-163 / DSM 7039 / HB27), this protein is Transcriptional regulator MraZ.